The sequence spans 55 residues: Large ribosomal subunit protein bL33B (55 aa).

Belongs to the bacterial ribosomal protein bL33 family.

The polypeptide is Large ribosomal subunit protein bL33B (Mycolicibacterium paratuberculosis (strain ATCC BAA-968 / K-10) (Mycobacterium paratuberculosis)).